The chain runs to 314 residues: Target of rapamycin complex subunit wat1 (314 aa).

WD repeat units lie at residues 1–35 (MSVQ…CSRT), 38–76 (HADS…QMPL), 81–120 (GHTN…VQRN), 122–161 (DHKS…CTHE), 165–204 (EEDV…GASL), 213–252 (AHQR…FMLE), and 257–296 (GHQR…TIRQ). Residue Ser-141 is modified to Phosphoserine.

Belongs to the WD repeat LST8 family. The target of rapamycin complex 1 (TORC1) is composed of at least mip1, pop3/wat1, tco89, toc1 and tor2. The target of rapamycin complex 2 (TORC2) is composed of at least bit61, pop3/wat1, sin1, ste20 and tor1. Interacts with prp2.

The protein localises to the cytoplasm. The protein resides in the nucleus. Functionally, component of both TORC1 and TORC2, which regulate multiple cellular processes to control cell growth in response to environmental signals. Nutrient limitation and environmental stress signals cause inactivation of TORC1. Active TORC1 positively controls cell growth and ribosome biogenesis by regulating ribosomal protein gene expression. TORC1 negatively controls G1 cell-cycle arrest, sexual development and amino acid uptake. Represses mating, meiosis and sporulation efficiency by interfering with the functions of the transcription factor ste11 and the meiosis-promoting RNA-binding protein mei2. TORC2 is required for cell survival under various stress conditions. TORC2 positively controls G1 cell-cycle arrest, sexual development and amino acid uptake. Positively regulates amino acid uptake through the control of expression of amino acid permeases. May play a role in mRNA maturation as a coupling protein between splicing and synthesis and/or stabilization. This is Target of rapamycin complex subunit wat1 from Schizosaccharomyces pombe (strain 972 / ATCC 24843) (Fission yeast).